We begin with the raw amino-acid sequence, 706 residues long: Elongation factor G (706 aa).

A tr-type G domain is found at 8-295 (ERYRNFGIMA…AVIDYLPSPL (288 aa)). Residues 17–24 (AHIDAGKT), 92–96 (DTPGH), and 146–149 (NKMD) contribute to the GTP site.

Belongs to the TRAFAC class translation factor GTPase superfamily. Classic translation factor GTPase family. EF-G/EF-2 subfamily.

It localises to the cytoplasm. Catalyzes the GTP-dependent ribosomal translocation step during translation elongation. During this step, the ribosome changes from the pre-translocational (PRE) to the post-translocational (POST) state as the newly formed A-site-bound peptidyl-tRNA and P-site-bound deacylated tRNA move to the P and E sites, respectively. Catalyzes the coordinated movement of the two tRNA molecules, the mRNA and conformational changes in the ribosome. The protein is Elongation factor G of Jannaschia sp. (strain CCS1).